The chain runs to 557 residues: Fanconi anemia group C protein homolog (557 aa).

As to quaternary structure, belongs to the multisubunit FA complex composed of FANCA, FANCB, FANCC, FANCE, FANCF, FANCG, FANCL/PHF9 and FANCM. This complex may also include HSP70. Interacts with ZBTB32. Upon IFNG induction, interacts with STAT1. Interacts with CDK1. Interacts with EIF2AK2.

The protein localises to the nucleus. It localises to the cytoplasm. In terms of biological role, DNA repair protein that may operate in a postreplication repair or a cell cycle checkpoint function. May be implicated in interstrand DNA cross-link repair and in the maintenance of normal chromosome stability. Upon IFNG induction, may facilitate STAT1 activation by recruiting STAT1 to IFNGR1. The polypeptide is Fanconi anemia group C protein homolog (Fancc) (Rattus norvegicus (Rat)).